Here is a 157-residue protein sequence, read N- to C-terminus: Transcription elongation factor GreA (157 aa).

It belongs to the GreA/GreB family.

In terms of biological role, necessary for efficient RNA polymerase transcription elongation past template-encoded arresting sites. The arresting sites in DNA have the property of trapping a certain fraction of elongating RNA polymerases that pass through, resulting in locked ternary complexes. Cleavage of the nascent transcript by cleavage factors such as GreA or GreB allows the resumption of elongation from the new 3'terminus. GreA releases sequences of 2 to 3 nucleotides. This is Transcription elongation factor GreA from Caulobacter vibrioides (strain ATCC 19089 / CIP 103742 / CB 15) (Caulobacter crescentus).